The primary structure comprises 204 residues: 3,4-dihydroxy-2-butanone 4-phosphate synthase (204 aa).

Glu27 contacts Mg(2+). Residue Asp31 coordinates D-ribulose 5-phosphate. Cys56 is modified (S-glutathionyl cysteine). D-ribulose 5-phosphate is bound by residues Thr82 and Arg140 to Thr144. His143 is a Mg(2+) binding site.

It belongs to the DHBP synthase family. As to quaternary structure, homodimer. It depends on Mg(2+) as a cofactor. Mn(2+) is required as a cofactor. Post-translationally, S-glutathionylation is reversible and dependent on a glutaredoxin.

It carries out the reaction D-ribulose 5-phosphate = (2S)-2-hydroxy-3-oxobutyl phosphate + formate + H(+). Its pathway is cofactor biosynthesis; riboflavin biosynthesis; 2-hydroxy-3-oxobutyl phosphate from D-ribulose 5-phosphate: step 1/1. Functionally, catalyzes the conversion of D-ribulose 5-phosphate to formate and 3,4-dihydroxy-2-butanone 4-phosphate. The polypeptide is 3,4-dihydroxy-2-butanone 4-phosphate synthase (Schizosaccharomyces pombe (strain 972 / ATCC 24843) (Fission yeast)).